The following is a 188-amino-acid chain: Ribosome-recycling factor (188 aa).

Belongs to the RRF family.

Its subcellular location is the cytoplasm. Functionally, responsible for the release of ribosomes from messenger RNA at the termination of protein biosynthesis. May increase the efficiency of translation by recycling ribosomes from one round of translation to another. This is Ribosome-recycling factor from Blochmanniella floridana.